The sequence spans 403 residues: Phosphomevalonate dehydratase large subunit (403 aa).

(R)-5-phosphomevalonate-binding residues include glycine 48, valine 49, serine 50, asparagine 79, and proline 80. Cysteine 119 is a binding site for [4Fe-4S] cluster. (R)-5-phosphomevalonate contacts are provided by glutamate 138 and serine 139. 2 residues coordinate [4Fe-4S] cluster: cysteine 301 and cysteine 358. Position 378 (lysine 378) interacts with (R)-5-phosphomevalonate.

This sequence belongs to the AcnX type II large subunit family. In terms of assembly, heterodimer composed of a large subunit (PMDh-L) and a small subunit (PMDh-S). [4Fe-4S] cluster serves as cofactor.

The catalysed reaction is (R)-5-phosphomevalonate = (2E)-3-methyl-5-phosphooxypent-2-enoate + H2O. It participates in isoprenoid biosynthesis; isopentenyl diphosphate biosynthesis via mevalonate pathway. In terms of biological role, component of a hydro-lyase that catalyzes the dehydration of mevalonate 5-phosphate (MVA5P) to form trans-anhydromevalonate 5-phosphate (tAHMP). Involved in the archaeal mevalonate (MVA) pathway, which provides fundamental precursors for isoprenoid biosynthesis, such as isopentenyl diphosphate (IPP) and dimethylallyl diphosphate (DMAPP). The sequence is that of Phosphomevalonate dehydratase large subunit from Methanocaldococcus jannaschii (strain ATCC 43067 / DSM 2661 / JAL-1 / JCM 10045 / NBRC 100440) (Methanococcus jannaschii).